Here is a 533-residue protein sequence, read N- to C-terminus: MSSLVSEIARRRTFAIISHPDAGKTTLTEKLLWFGGAIQVAGEVRARKADRHATSDWMELEKQRGISVTSSVMQFPYSRESADGKAQENIVNLLDTPGHEDFSEDTYRTLTAVDSAVMVIDSVNGVEAQTIKLLNVCRLRDTPILTFINKLDREGRSPIELLDEIEDVLQIQCAPMTWPIGMGKAFRGVYHLIDDKVQLFDPHGDKGTAAILDGLDNPELDRILGSQAEELRIEIELVRGASHTFDKAAFLNGKQTPVYFGSAINNFGVQSLLDALCELSPPPLARNTESRVVEPQEPKFTGFVFKIQANMDPRHRDRIAFVRVCSGRFERGMKLLHVSAGKTVAINNAITFMAQDRNTTEEAYAGDIIGVPNHGTIRLGDVFTEGEPLKFTGIPSFAPEFFRRARLNNPLKVKQLQKGLQQLAEEGATQMFRPLASNDLVLGAVGILQFDVVAHRLEHEYGVDAIFESHECATARWLKGTPAEIEKLIAKAGHNVALDGAGDHVYLAPSMVNLRLTQERFPELQFLETREIV.

In terms of domain architecture, tr-type G spans 9–284 (ARRRTFAIIS…ALCELSPPPL (276 aa)). Residues 18–25 (SHPDAGKT), 95–99 (DTPGH), and 149–152 (NKLD) contribute to the GTP site.

This sequence belongs to the TRAFAC class translation factor GTPase superfamily. Classic translation factor GTPase family. PrfC subfamily.

It localises to the cytoplasm. In terms of biological role, increases the formation of ribosomal termination complexes and stimulates activities of RF-1 and RF-2. It binds guanine nucleotides and has strong preference for UGA stop codons. It may interact directly with the ribosome. The stimulation of RF-1 and RF-2 is significantly reduced by GTP and GDP, but not by GMP. The protein is Peptide chain release factor 3 of Cupriavidus taiwanensis (strain DSM 17343 / BCRC 17206 / CCUG 44338 / CIP 107171 / LMG 19424 / R1) (Ralstonia taiwanensis (strain LMG 19424)).